Reading from the N-terminus, the 436-residue chain is MFDSTLNPLWQRYILAVQEEVKPALGCTEPISLALAAAVAAAELEGPVERVEAWVSPNLMKNGLGVTVPGTGMVGLPIAAALGALGGNANAGLEVLKDATAQAIADAKALLAAGKVSVKIQEPCNEILFSRAKVWNGEKWACVTIVGGHTNIVRIETHNGVVFTQQACVAEGEQESPLTVLSRTTLAEILKFVNEVPFAAIRFILDSAKLNCALSQEGLSGKWGLHIGATLEKQCERGLLAKDLSSSIVIRTSAASDARMGGATLPAMSNSGSGNQGITATMPVVVVAEHFGADDERLARALMLSHLSAIYIHNQLPRLSALCAATTAAMGAAAGMAWLVDGRYETISMAISSMIGDVSGMICDGASNSCAMKVSTSASAAWKAVLMALDDTAVTGNEGIVAHDVEQSIANLCALASHSMQQTDRQIIEIMASKAR.

It belongs to the UPF0597 family.

The sequence is that of UPF0597 protein YhaM from Shigella sonnei (strain Ss046).